A 426-amino-acid polypeptide reads, in one-letter code: D-tagatose-1,6-bisphosphate aldolase subunit KbaZ (426 aa).

This sequence belongs to the GatZ/KbaZ family. KbaZ subfamily. In terms of assembly, forms a complex with KbaY.

It functions in the pathway carbohydrate metabolism; D-tagatose 6-phosphate degradation; D-glyceraldehyde 3-phosphate and glycerone phosphate from D-tagatose 6-phosphate: step 2/2. Its function is as follows. Component of the tagatose-1,6-bisphosphate aldolase KbaYZ that is required for full activity and stability of the Y subunit. Could have a chaperone-like function for the proper and stable folding of KbaY. When expressed alone, KbaZ does not show any aldolase activity. The protein is D-tagatose-1,6-bisphosphate aldolase subunit KbaZ of Escherichia coli (strain 55989 / EAEC).